Here is a 204-residue protein sequence, read N- to C-terminus: METPIDAPNKDEHECPRWKKSTVVFVLGGPGSGKGTQCANVVKHFSYTHFSAGDLLRAEIKSGSEFGAMIQSMIAEGRIVPSEITVKLLCKAMEESGNDKFLIDGFPRNEENRNVFENVARIEPAFVLFFDCPEEELERRIMSRNQGREDDNIETIKKRFKVFVESTLPIISYYESKGKLRKINAAKSSEEVFEAVRVLFASET.

31-36 (GSGKGT) provides a ligand contact to ATP. Residues 51-80 (SAGDLLRAEIKSGSEFGAMIQSMIAEGRIV) are NMP. A ribonucleoside 5'-phosphate-binding positions include arginine 57, 78–80 (RIV), and 105–108 (GFPR). Asparagine 112 serves as a coordination point for CMP. An LID region spans residues 143-151 (SRNQGREDD). Arginine 144 is a binding site for ATP. Residues arginine 148 and arginine 159 each contribute to the a ribonucleoside 5'-phosphate site. Lysine 187 is an ATP binding site.

It belongs to the adenylate kinase family. UMP-CMP kinase subfamily. As to quaternary structure, monomer. The cofactor is Mg(2+).

The protein localises to the cytoplasm. It is found in the nucleus. The catalysed reaction is CMP + ATP = CDP + ADP. The enzyme catalyses dCMP + ATP = dCDP + ADP. It carries out the reaction UMP + ATP = UDP + ADP. In terms of biological role, catalyzes the phosphorylation of pyrimidine nucleoside monophosphates at the expense of ATP. Plays an important role in de novo pyrimidine nucleotide biosynthesis. Has preference for UMP and CMP as phosphate acceptors. The polypeptide is Probable UMP-CMP kinase 1 (UMK1) (Arabidopsis thaliana (Mouse-ear cress)).